A 493-amino-acid chain; its full sequence is Cobyric acid synthase (493 aa).

The 189-residue stretch at 252–440 (PVKIVVLRLR…IHGIFESDSL (189 aa)) folds into the GATase cobBQ-type domain. Cys-333 functions as the Nucleophile in the catalytic mechanism. His-432 is an active-site residue.

The protein belongs to the CobB/CobQ family. CobQ subfamily.

Its pathway is cofactor biosynthesis; adenosylcobalamin biosynthesis. Catalyzes amidations at positions B, D, E, and G on adenosylcobyrinic A,C-diamide. NH(2) groups are provided by glutamine, and one molecule of ATP is hydrogenolyzed for each amidation. In Thermodesulfovibrio yellowstonii (strain ATCC 51303 / DSM 11347 / YP87), this protein is Cobyric acid synthase.